The following is an 81-amino-acid chain: MANLILKQSLIILLIIYSTPILSSQARILRTYRPTTMGDMDSQVLLRELGIDLSKFKGQDERRFLVDSERVSPGGPDPQHH.

The signal sequence occupies residues 1-26; that stretch reads MANLILKQSLIILLIIYSTPILSSQA. Hydroxyproline is present on residues Pro73 and Pro76. Pro76 carries an O-linked (Ara...) hydroxyproline glycan.

It belongs to the CLV3/ESR signal peptide family. Post-translationally, the O-glycosylation (arabinosylation) of the hydroxyproline Pro-76 enhances binding affinity of the CLE6p peptide for its receptor. Mostly expressed in roots, seedlings, stems and flowers, and, to a lower extent, in apex and siliques.

The protein resides in the secreted. It is found in the extracellular space. Extracellular signal peptide that regulates cell fate. In Arabidopsis thaliana (Mouse-ear cress), this protein is CLAVATA3/ESR (CLE)-related protein 6.